We begin with the raw amino-acid sequence, 276 residues long: Large ribosomal subunit protein uL2 (276 aa).

Disordered stretches follow at residues 37 to 59 and 224 to 276; these read QFQKSGRNNNGHITTRHKGGGHK and VAMN…RHKR. The segment covering 50-59 has biased composition (basic residues); it reads TTRHKGGGHK.

The protein belongs to the universal ribosomal protein uL2 family. Part of the 50S ribosomal subunit. Forms a bridge to the 30S subunit in the 70S ribosome.

One of the primary rRNA binding proteins. Required for association of the 30S and 50S subunits to form the 70S ribosome, for tRNA binding and peptide bond formation. It has been suggested to have peptidyltransferase activity; this is somewhat controversial. Makes several contacts with the 16S rRNA in the 70S ribosome. The protein is Large ribosomal subunit protein uL2 of Ralstonia nicotianae (strain ATCC BAA-1114 / GMI1000) (Ralstonia solanacearum).